We begin with the raw amino-acid sequence, 601 residues long: Elongation factor 4 (601 aa).

Residues 7–189 (DRIRNFSIIA…ALVTRLPAPK (183 aa)) enclose the tr-type G domain. GTP is bound by residues 19–24 (DHGKST) and 136–139 (NKVD).

The protein belongs to the TRAFAC class translation factor GTPase superfamily. Classic translation factor GTPase family. LepA subfamily.

The protein localises to the cell inner membrane. The enzyme catalyses GTP + H2O = GDP + phosphate + H(+). Functionally, required for accurate and efficient protein synthesis under certain stress conditions. May act as a fidelity factor of the translation reaction, by catalyzing a one-codon backward translocation of tRNAs on improperly translocated ribosomes. Back-translocation proceeds from a post-translocation (POST) complex to a pre-translocation (PRE) complex, thus giving elongation factor G a second chance to translocate the tRNAs correctly. Binds to ribosomes in a GTP-dependent manner. The chain is Elongation factor 4 from Granulibacter bethesdensis (strain ATCC BAA-1260 / CGDNIH1).